Consider the following 448-residue polypeptide: Death-associated protein kinase 3 (448 aa).

The 263-residue stretch at 13-275 folds into the Protein kinase domain; sequence YEMGEELGSG…IAQSLEHSWI (263 aa). Residues 19 to 27 and Lys-42 contribute to the ATP site; that span reads LGSGQFAIV. Catalysis depends on Asp-139, which acts as the Proton acceptor. An activation segment region spans residues 161-204; that stretch reads DFGIAHRIEAGSEFKNIFGTPEFVAPEIVNYEPLGLEADMWSIG. A phosphothreonine mark is found at Thr-180 and Thr-225. Position 265 is a phosphothreonine; by autocatalysis (Thr-265). At Thr-265 the chain carries Phosphothreonine; by ROCK1. Ser-304 carries the phosphoserine; by DAPK1 modification. Ser-306 carries the phosphoserine; by autocatalysis and DAPK1 modification. Residues Ser-307, Ser-313, and Ser-321 each carry the phosphoserine; by DAPK1 modification. The segment at 390–448 is interaction with CDC5L; it reads AQEEARAALLGAGGLKRRLCRLENRYDALAAQVAAEVQFVRDLVRALEQERLQAECGVR. The segment at 422-436 is leucine-zipper; that stretch reads VAAEVQFVRDLVRAL.

Belongs to the protein kinase superfamily. CAMK Ser/Thr protein kinase family. DAP kinase subfamily. Homooligomer in its kinase-active form (homotrimers and homodimers are reported); monomeric in its kinase-inactive form. Homodimerization is required for activation segment autophosphorylation. Interacts with DAXX, PAWR, ATF4, NLK, TCF7L2, UBE2D1, UBE2D2, UBE2D3, and CDC5L. Interacts with AR; enhanced by AATF. Interacts with LUZP1; the interaction is likely to occur throughout the cell cycle and reduces the LUZP1-mediated suppression of MYL9 phosphorylation. Mg(2+) serves as cofactor. In terms of processing, ubiquitinated. Ubiquitination mediated by the UBE2D3 E3 ligase does not lead to proteasomal degradation, but influences promyelocytic leukemia protein nuclear bodies (PML-NBs) formation in the nucleus. Post-translationally, the phosphorylation status is critical for kinase activity, oligomerization and intracellular localization. Phosphorylation at Thr-180, Thr-225 and Thr-265 is essential for activity. The phosphorylated form is localized in the cytoplasm and nuclear translocation or retention is maximal when it is not phosphorylated. Phosphorylation increases the trimeric form, and its dephosphorylation favors a kinase-inactive monomeric form. As to expression, highly expressed in heart, brain, lung, skeletal muscle, kidney and testis. Lower levels in liver and spleen.

It localises to the nucleus. The protein localises to the PML body. It is found in the cytoplasm. The protein resides in the cytoskeleton. Its subcellular location is the microtubule organizing center. It localises to the centrosome. The protein localises to the chromosome. It is found in the centromere. The protein resides in the spindle. Its subcellular location is the midbody. It catalyses the reaction L-seryl-[protein] + ATP = O-phospho-L-seryl-[protein] + ADP + H(+). The catalysed reaction is L-threonyl-[protein] + ATP = O-phospho-L-threonyl-[protein] + ADP + H(+). With respect to regulation, a sequential activation is proposed: autophosphorylation at consensus sites is leading to dimerization of the catalytic domain and activation segment exchange (producing an active confirmation of both kinase modules in trans) followed by phosphorylation at Thr-180 in the activation segment and at other regulatory sites. Phosphorylation at Thr-180, Thr-225 and Thr-265 is essential for activity. Inhibited by pyridone 6 (K00225), a potent, ATP-competitive inhibitor. Phosphorylation at Thr-180, Thr-225 and Thr-265 is essential for activity. Functionally, serine/threonine kinase which is involved in the regulation of apoptosis, autophagy, transcription, translation and actin cytoskeleton reorganization. Regulates both type I (caspase-dependent) apoptotic and type II (caspase-independent) autophagic cell deaths signal, depending on the cellular setting. Involved in formation of promyelocytic leukemia protein nuclear body (PML-NB). Involved in apoptosis involving PAWR which mediates cytoplasmic relocation; in vitro phosphorylates PAWR. Regulates myosin phosphorylation in both smooth muscle and non-muscle cells. In smooth muscle, regulates myosin either directly by phosphorylating MYL12B and MYL9 or through inhibition of smooth muscle myosin phosphatase (SMPP1M) via phosphorylation of PPP1R12A; the inhibition of SMPP1M functions to enhance muscle responsiveness to Ca(2+) and promote a contractile state. Phosphorylates MYL12B in non-muscle cells leading to reorganization of actin cytoskeleton such as in regulation of cell polarity and cell migration. Positively regulates canonical Wnt/beta-catenin signaling through interaction with NLK and TCF7L2; disrupts the NLK-TCF7L2 complex thereby influencing the phosphorylation of TCF7L2 by NLK. Phosphorylates STAT3 and enhances its transcriptional activity. Enhances transcription from AR-responsive promoters in a hormone- and kinase-dependent manner. Phosphorylates histone H3 on 'Thr-11' at centromeres during mitosis. Phosphorylates RPL13A on 'Ser-77' upon interferon-gamma activation which is causing RPL13A release from the ribosome, RPL13A association with the GAIT complex and its subsequent involvement in transcript-selective translation inhibition. In Mus musculus (Mouse), this protein is Death-associated protein kinase 3 (Dapk3).